The primary structure comprises 118 residues: Na(+)/H(+) antiporter subunit G1 (118 aa).

3 helical membrane-spanning segments follow: residues 9–29 (VSII…TGLI), 47–67 (LGAM…EGYV), and 69–89 (MQLI…SHLI).

It belongs to the CPA3 antiporters (TC 2.A.63) subunit G family. As to quaternary structure, may form a heterooligomeric complex that consists of seven subunits: mnhA1, mnhB1, mnhC1, mnhD1, mnhE1, mnhF1 and mnhG1.

The protein localises to the cell membrane. In terms of biological role, mnh complex is a Na(+)/H(+) antiporter involved in Na(+) excretion. This is Na(+)/H(+) antiporter subunit G1 (mnhG1) from Staphylococcus epidermidis (strain ATCC 35984 / DSM 28319 / BCRC 17069 / CCUG 31568 / BM 3577 / RP62A).